Consider the following 292-residue polypeptide: 5,10-methylenetetrahydrofolate reductase (292 aa).

The Proton donor/acceptor role is filled by E26. An NADH-binding site is contributed by T57. The FAD site is built by Y58, A60, H86, R116, G117, D118, A130, Y150, H154, A157, D163, N166, R169, and K170. D118 is a (6S)-5-methyl-5,6,7,8-tetrahydrofolate binding site. Q181 serves as a coordination point for NADH. Residues Q181, Q217, and R277 each contribute to the (6S)-5-methyl-5,6,7,8-tetrahydrofolate site.

It belongs to the methylenetetrahydrofolate reductase family. Requires FAD as cofactor.

The enzyme catalyses (6S)-5-methyl-5,6,7,8-tetrahydrofolate + NAD(+) = (6R)-5,10-methylene-5,6,7,8-tetrahydrofolate + NADH + H(+). The protein operates within one-carbon metabolism; tetrahydrofolate interconversion. Its pathway is amino-acid biosynthesis; L-methionine biosynthesis via de novo pathway. Functionally, catalyzes the NADH-dependent reduction of 5,10-methylenetetrahydrofolate to 5-methyltetrahydrofolate. Is required to provide the methyl group necessary for methionine synthetase to convert homocysteine to methionine; the methyl group is given by 5-methyltetrahydrofolate. This chain is 5,10-methylenetetrahydrofolate reductase (metF), found in Neisseria meningitidis serogroup B (strain ATCC BAA-335 / MC58).